The primary structure comprises 432 residues: MVGVMMAAAATPGCGVSQALTACGSHEGLRRVAPVFGPGVVSVSAPCKLPRKLNVQAVAEPIAKSSPRTIEECEANVVAGNAPAAPPVPAKPSAPEGTPAISPLVMPARPRRNRRSPALRAAFQETTISPANFILPLFVHEGEQNAPIGAMPGCQRLGWRHGLIDEVYKARDVGVNSVVLFPKVPDALKSSTGDEAYNPDGLVPRCIRLLKDKFPDLVIYTDVALDPYSSDGHDGIVREDGLIMNDETVHQLCKQAVAQAQAGADVVSPSDMMDGRVGAIRKALDLAGHQDVSIMAYTAKYASAFYGPFREALDSNPRFGDKKTYQMNPANYREALIETRMDEAEGADILMVKPAMPYLDVIRLLRDNTALPISAYQVSGEYSMIRAAAAAGMLDEKKAVLESLLSIRRAGADVILTYFAIQAAQWLCAERV.

The interval 84 to 113 (AAPPVPAKPSAPEGTPAISPLVMPARPRRN) is disordered. Lys300 serves as the catalytic Schiff-base intermediate with substrate. 5-aminolevulinate contacts are provided by Arg310 and Lys322. Position 338 (Glu338) interacts with Mg(2+). Lys353 (schiff-base intermediate with substrate) is an active-site residue. Residues Ser379 and Tyr418 each coordinate 5-aminolevulinate.

The protein belongs to the ALAD family. As to quaternary structure, homooctamer. The cofactor is Mg(2+).

It is found in the plastid. The protein localises to the chloroplast. The enzyme catalyses 2 5-aminolevulinate = porphobilinogen + 2 H2O + H(+). Its pathway is porphyrin-containing compound metabolism; protoporphyrin-IX biosynthesis; coproporphyrinogen-III from 5-aminolevulinate: step 1/4. In terms of biological role, catalyzes an early step in the biosynthesis of tetrapyrroles. Binds two molecules of 5-aminolevulinate per subunit, each at a distinct site, and catalyzes their condensation to form porphobilinogen. The polypeptide is Delta-aminolevulinic acid dehydratase, chloroplastic (HEMB) (Physcomitrium patens (Spreading-leaved earth moss)).